We begin with the raw amino-acid sequence, 1026 residues long: Translation initiation factor IF-2, chloroplastic (1026 aa).

A chloroplast-targeting transit peptide spans Met1–Ser63. Over residues Ala158–Glu173 the composition is skewed to basic and acidic residues. 3 disordered regions span residues Ala158–Ser208, Phe230–Lys284, and Val300–Lys393. A compositionally biased stretch (polar residues) spans Ser178–Asn194. The span at Leu254–Pro269 shows a compositional bias: pro residues. Basic and acidic residues predominate over residues Ser306–Leu317. The segment covering Ser384–Lys393 has biased composition (basic residues). Positions Asp499–Lys672 constitute a tr-type G domain. Residues Gly508–Thr515 are G1. Gly508–Thr515 lines the GTP pocket. Positions Gly533–Gly537 are G2. A G3 region spans residues Asp558–Gly561. GTP is bound by residues Asp558–His562 and Asn612–Asp615. The tract at residues Asn612–Asp615 is G4. The tract at residues Ser648–Leu650 is G5.

Belongs to the TRAFAC class translation factor GTPase superfamily. Classic translation factor GTPase family. IF-2 subfamily.

It is found in the plastid. Its subcellular location is the chloroplast. In terms of biological role, one of the essential components for the initiation of protein synthesis. Protects formylmethionyl-tRNA from spontaneous hydrolysis and promotes its binding to the 30S ribosomal subunits. Also involved in the hydrolysis of GTP during the formation of the 70S ribosomal complex. This is Translation initiation factor IF-2, chloroplastic from Arabidopsis thaliana (Mouse-ear cress).